A 98-amino-acid polypeptide reads, in one-letter code: NADH-ubiquinone oxidoreductase chain 4L (98 aa).

Helical transmembrane passes span 1-21, 29-49, and 61-81; these read MSLT…GLLM, SLLC…ITIL, and IILL…LVMV.

The protein belongs to the complex I subunit 4L family. Core subunit of respiratory chain NADH dehydrogenase (Complex I) which is composed of 45 different subunits.

The protein localises to the mitochondrion inner membrane. The catalysed reaction is a ubiquinone + NADH + 5 H(+)(in) = a ubiquinol + NAD(+) + 4 H(+)(out). In terms of biological role, core subunit of the mitochondrial membrane respiratory chain NADH dehydrogenase (Complex I) which catalyzes electron transfer from NADH through the respiratory chain, using ubiquinone as an electron acceptor. Part of the enzyme membrane arm which is embedded in the lipid bilayer and involved in proton translocation. The polypeptide is NADH-ubiquinone oxidoreductase chain 4L (MT-ND4L) (Mystacina tuberculata (New Zealand lesser short-tailed bat)).